The primary structure comprises 724 residues: Small conductance calcium-activated potassium channel protein 3 (724 aa).

Over residues 1–11 (MDTSGHFHDSG) the composition is skewed to basic and acidic residues. Disordered stretches follow at residues 1–161 (MDTS…RDSN) and 232–251 (ATHN…FPKA). Pro residues predominate over residues 34–58 (QPPPPPPPPAPPAAPQQPPGPPLQP). The segment covering 59–88 (QPLQLQQQQQQQQQQPPHPLSQLAQLQSQP) has biased composition (low complexity). Residues 105 to 125 (PSSNSTAILHPSSRQGSQLNL) show a composition bias toward polar residues. Low complexity predominate over residues 131 to 140 (GHSPSSTATS). S160 is modified (phosphoserine). The segment covering 232–249 (ATHNHQHAGTTASSTTFP) has biased composition (polar residues). A helical membrane pass occupies residues 281–301 (LIFGMFGIVVMVIETELSWGL). Residues 308 to 328 (FSLALKCLISLSTIILLGLII) traverse the membrane as a helical segment. Residues 359–379 (ISLEMLVCAIHPIPGEYKFFW) form a helical membrane-spanning segment. Residues 398–418 (IILSIPMFLRLYLIARVMLLH) traverse the membrane as a helical segment. The helical transmembrane segment at 447–467 (LMTICPGTVLLVFSISLWIIA) threads the bilayer. The pore-forming intramembrane region spans 487 to 507 (FLGAMWLISITFLSIGYGDMV). The chain crosses the membrane as a helical span at residues 516–536 (VCLLTGIMGAGCTALVVAVVA). The tract at residues 554-630 (DTQLTKRIKN…LVDLSKMQNV (77 aa)) is calmodulin-binding. The stretch at 635–662 (ITELNDRSEDLEKQIGSLESKLEHLTAS) forms a coiled coil. The tract at residues 702-724 (LSDSPIGVSSTSFPTPYTSSSSC) is disordered. A compositionally biased stretch (low complexity) spans 710–724 (SSTSFPTPYTSSSSC).

Belongs to the potassium channel KCNN family. KCa2.3/KCNN3 subfamily. In terms of assembly, homodimer. Heteromultimer with KCNN2 or KCNN1; this modulates plasma membrane expression and consequently the small conductance calcium-activated potassium channel activity. The complex is composed of 4 channel subunits each of which binds to a calmodulin subunit which regulates the channel activity through calcium-binding. Interacts with CALM1.

Its subcellular location is the cell membrane. It localises to the cytoplasm. The protein resides in the myofibril. It is found in the sarcomere. The protein localises to the z line. The enzyme catalyses K(+)(in) = K(+)(out). Inhibited by bee venom neurotoxin apamin. Its function is as follows. Small conductance calcium-activated potassium channel that mediates the voltage-independent transmembrane transfer of potassium across the cell membrane through a constitutive interaction with calmodulin which binds the intracellular calcium allowing its opening. The current is characterized by a voltage-independent activation, an intracellular calcium concentration increase-dependent activation and a single-channel conductance of 10 picosiemens. Also presents an inwardly rectifying current, thus reducing its already small outward conductance of potassium ions, which is particularly the case when the membrane potential displays positive values, above + 20 mV. Activation is followed by membrane hyperpolarization. Thought to regulate neuronal excitability by contributing to the slow component of synaptic afterhyperpolarization. The sequence is that of Small conductance calcium-activated potassium channel protein 3 from Sus scrofa (Pig).